Reading from the N-terminus, the 317-residue chain is Non-structural protein 2 (317 aa).

Residues 107 to 109 (SVR), lysine 188, and 221 to 223 (HGK) contribute to the ATP site. The RNA-binding stretch occupies residues 205-241 (LVAELRWQYNRFAVITHGKGHYRVVKYSSVANHADRV). The active-site For NTPase and RTPase activities is the histidine 225. Residue arginine 227 participates in ATP binding.

The protein belongs to the rotavirus NSP2 family. As to quaternary structure, homooctamer. Interacts with VP1; this interaction is weak. Interacts with NSP5; this interaction leads to up-regulation of NSP5 phosphorylation and formation of viral factories. Interacts with host DCP1A, DCP1B, DDX6, EDC4 and EIF2S1/eIF2-alpha; these interactions are probably part of the sequestration of some host SGs and PBs proteins in viral factories. Requires Mg(2+) as cofactor.

The protein localises to the host cytoplasm. Its function is as follows. Participates in replication and packaging of the viral genome. Plays a crucial role, together with NSP5, in the formation of virus factories (viroplasms), which are large inclusions in the host cytoplasm where replication intermediates are assembled and viral RNA replication takes place. Displays ssRNA binding, NTPase, RNA triphosphatase (RTPase) and ATP-independent helix-unwinding activities. The unwinding activity may prepare and organize plus-strand RNAs for packaging and replication by removing interfering secondary structures. The RTPase activity plays a role in the removal of the gamma-phosphate from the rotavirus RNA minus strands of dsRNA genome segments. Participates in the selective exclusion of host proteins from stress granules (SG) and P bodies (PB). Also participates in the sequestration of these remodeled organelles in viral factories. The protein is Non-structural protein 2 of Rotavirus A (strain RVA/Human/United States/Wa/1974/G1P1A[8]) (RV-A).